A 198-amino-acid polypeptide reads, in one-letter code: Lipid A 4'-phosphatase (198 aa).

A helical transmembrane segment spans residues A143–F165.

It belongs to the lipid A LpxF 4'-phosphatase family.

Its subcellular location is the cell inner membrane. It participates in bacterial outer membrane biogenesis; LPS lipid A biosynthesis. Functionally, removes the 4'-phosphate group from tetra- and hexaacylated lipid A species, has no 1-phosphatase or Kdo hydrolase activity. Absence of the 4'-phosphate group renders the bacteria resistant to host-derived cationic antimicrobial peptides (CAMP), allowing it to camouflage itself from the host innate immune response, and plays a critical role in the long-term colonization of the host's stomach. In Helicobacter pylori (strain J99 / ATCC 700824) (Campylobacter pylori J99), this protein is Lipid A 4'-phosphatase.